The sequence spans 214 residues: Phosphatidylserine decarboxylase proenzyme (214 aa).

Catalysis depends on S183, which acts as the Schiff-base intermediate with substrate; via pyruvic acid. The residue at position 183 (S183) is a Pyruvic acid (Ser); by autocatalysis.

Belongs to the phosphatidylserine decarboxylase family. PSD-A subfamily. Heterodimer of a large membrane-associated beta subunit and a small pyruvoyl-containing alpha subunit. The cofactor is pyruvate. In terms of processing, is synthesized initially as an inactive proenzyme. Formation of the active enzyme involves a self-maturation process in which the active site pyruvoyl group is generated from an internal serine residue via an autocatalytic post-translational modification. Two non-identical subunits are generated from the proenzyme in this reaction, and the pyruvate is formed at the N-terminus of the alpha chain, which is derived from the carboxyl end of the proenzyme. The post-translation cleavage follows an unusual pathway, termed non-hydrolytic serinolysis, in which the side chain hydroxyl group of the serine supplies its oxygen atom to form the C-terminus of the beta chain, while the remainder of the serine residue undergoes an oxidative deamination to produce ammonia and the pyruvoyl prosthetic group on the alpha chain.

The protein resides in the cell membrane. It carries out the reaction a 1,2-diacyl-sn-glycero-3-phospho-L-serine + H(+) = a 1,2-diacyl-sn-glycero-3-phosphoethanolamine + CO2. Its pathway is phospholipid metabolism; phosphatidylethanolamine biosynthesis; phosphatidylethanolamine from CDP-diacylglycerol: step 2/2. In terms of biological role, catalyzes the formation of phosphatidylethanolamine (PtdEtn) from phosphatidylserine (PtdSer). In Desulfotalea psychrophila (strain LSv54 / DSM 12343), this protein is Phosphatidylserine decarboxylase proenzyme.